The following is a 660-amino-acid chain: Iron(3+)-hydroxamate import system permease protein FhuB (660 aa).

The next 18 helical transmembrane spans lie at 5-25, 62-82, 93-113, 118-138, 147-167, 197-217, 240-260, 277-297, 303-323, 348-368, 391-411, 424-444, 447-467, 479-499, 528-548, 567-587, 607-627, and 635-655; these read IALFPALLLALLVIVATALTW, LAISLLVGAGLGLVGVLFQQV, LGVATGAQLGITVTTLWAIPG, QFAAQAGACVVGLIVFGVAWG, ILAGLVVSLYCGAINQLLVIF, QLLGGVMLTLLLLRPLTLMGL, AIVISALLVNAVGIIGFIGLF, LMLASLIGALILWLSDQIILW, MEVSTGSVTALIGAPLLLWLL, LAFALAGGVLLLMAVVVALSF, WPRIMAALFAGVMLAVAGCII, VLGISSGAAFGVVLMLFLVPG, FGWLLPAGSLGAAVTLLIIMI, MLLAGMALSTAFTMLLMMLQA, GIVMVILLAITPLCRRWLTIL, IALLLLAACLTATATMTIGPL, MPHIVISALVGGLLLVFADWC, and FQIPAGLLSTFIGAPYFIYLL.

Belongs to the binding-protein-dependent transport system permease family. FecCD subfamily. The complex is composed of two ATP-binding proteins (FhuC), a transmembrane protein (FhuB) and a solute-binding protein (FhuD). FhuB interacts with FhuC. FhuB interacts with FhuD. FhuB binds substrate-loaded FhuD more strongly than FhuD alone.

It localises to the cell inner membrane. In terms of biological role, part of the ABC transporter complex FhuCDB involved in iron(3+)-hydroxamate import. Responsible for the translocation of the substrate across the membrane. The sequence is that of Iron(3+)-hydroxamate import system permease protein FhuB (fhuB) from Escherichia coli (strain K12).